A 404-amino-acid polypeptide reads, in one-letter code: MHAWPDPSVPAVAGTPVPLKLFDTADQRVKEVDTTPDANGEVGMYVCGITPYDSTHLGHAATYLTFDLAQRQLLANGHKVHYVQNITDVDDPLFERAERDGVDWRELGTSQINLFRSDMEILSVIPPRDYIGAMESVDEVIAMVQQLLDAGAAYELDQGDIYASIDATEQFGYESNLDRATMEEYFAERGGDPDREGKRDPLDALVWRGHREGEPAWDSPFGPGRPGWHVECSAIATNRLGSHFAIQGGGSDLAFPHHEFSAAHAEAALKVERMAGHYVHAGMIALDGVKMSKSLGNLVFVHKLSEAGHDPSAIRLAVFAGHYREDRDFSDAILAEAEERLTRWREQLAGEVSEAEATEVVDKLRAILADDLNTPEALSLLDGAAGDCNQIIATALDGLLGVRI.

C47 contacts Zn(2+). Residues 47-50 (CGIT), T62, and 85-87 (NIT) each bind L-cysteinyl-5'-AMP. The short motif at 49-59 (ITPYDSTHLGH) is the 'HIGH' region element. The short motif at 188 to 193 (ERGGDP) is the 'ERGGDP' region element. An L-cysteinyl-5'-AMP-binding site is contributed by W228. Position 232 (C232) interacts with Zn(2+). 250 to 252 (GSD) contacts L-cysteinyl-5'-AMP. Residue H257 coordinates Zn(2+). L-cysteinyl-5'-AMP is bound at residue I284. The 'KMSKS' region motif lies at 290 to 294 (KMSKS).

This sequence belongs to the class-I aminoacyl-tRNA synthetase family. MshC subfamily. Monomer. Zn(2+) is required as a cofactor.

It carries out the reaction 1D-myo-inositol 2-amino-2-deoxy-alpha-D-glucopyranoside + L-cysteine + ATP = 1D-myo-inositol 2-(L-cysteinylamino)-2-deoxy-alpha-D-glucopyranoside + AMP + diphosphate + H(+). Catalyzes the ATP-dependent condensation of GlcN-Ins and L-cysteine to form L-Cys-GlcN-Ins. The polypeptide is L-cysteine:1D-myo-inositol 2-amino-2-deoxy-alpha-D-glucopyranoside ligase 1 (Corynebacterium urealyticum (strain ATCC 43042 / DSM 7109)).